The following is a 141-amino-acid chain: 16 kDa protein (141 aa).

A disordered region spans residues 97–119 (ASATVKKSHKSKPSKKKFKERKD). The span at 102-115 (KKSHKSKPSKKKFK) shows a compositional bias: basic residues.

The sequence is that of 16 kDa protein from Beta vulgaris (Sugar beet).